The chain runs to 91 residues: Small ribosomal subunit protein uS19 (91 aa).

This sequence belongs to the universal ribosomal protein uS19 family.

Its function is as follows. Protein S19 forms a complex with S13 that binds strongly to the 16S ribosomal RNA. The protein is Small ribosomal subunit protein uS19 of Saccharophagus degradans (strain 2-40 / ATCC 43961 / DSM 17024).